A 313-amino-acid chain; its full sequence is Dihydroorotate dehydrogenase (fumarate) (313 aa).

Residues alanine 20 and 44–45 each bind FMN; that span reads KS. Substrate-binding positions include lysine 44, 68-72, and asparagine 128; that span reads NSMGL. Residue asparagine 128 participates in FMN binding. Cysteine 131 serves as the catalytic Nucleophile. Substrate is bound at residue asparagine 133. Residues lysine 165 and valine 194 each contribute to the FMN site. 195-196 lines the substrate pocket; sequence NS. FMN contacts are provided by residues glycine 223, cysteine 249, 249-251, and 272-273; these read CGG and GT.

It belongs to the dihydroorotate dehydrogenase family. Type 1 subfamily. Homodimer. FMN is required as a cofactor.

It localises to the cytoplasm. It carries out the reaction (S)-dihydroorotate + fumarate = orotate + succinate. Its pathway is pyrimidine metabolism; UMP biosynthesis via de novo pathway. Its function is as follows. Catalyzes the conversion of dihydroorotate to orotate with fumarate as the electron acceptor. Molecular oxygen can replace fumarate in vitro. In Trypanosoma brucei brucei (strain 927/4 GUTat10.1), this protein is Dihydroorotate dehydrogenase (fumarate).